A 174-amino-acid polypeptide reads, in one-letter code: ATP-dependent protease subunit HslV (174 aa).

T2 is a catalytic residue. The Na(+) site is built by G157, C160, and T163.

This sequence belongs to the peptidase T1B family. HslV subfamily. A double ring-shaped homohexamer of HslV is capped on each side by a ring-shaped HslU homohexamer. The assembly of the HslU/HslV complex is dependent on binding of ATP.

The protein resides in the cytoplasm. The enzyme catalyses ATP-dependent cleavage of peptide bonds with broad specificity.. With respect to regulation, allosterically activated by HslU binding. In terms of biological role, protease subunit of a proteasome-like degradation complex believed to be a general protein degrading machinery. This chain is ATP-dependent protease subunit HslV, found in Cellvibrio japonicus (strain Ueda107) (Pseudomonas fluorescens subsp. cellulosa).